The primary structure comprises 160 residues: Cytochrome b6-f complex subunit 4 (160 aa).

3 helical membrane passes run 36–56 (LLYV…ALAV), 95–115 (LLGI…PFIE), and 131–151 (AVFL…TFPI).

This sequence belongs to the cytochrome b family. PetD subfamily. In terms of assembly, the 4 large subunits of the cytochrome b6-f complex are cytochrome b6, subunit IV (17 kDa polypeptide, PetD), cytochrome f and the Rieske protein, while the 4 small subunits are PetG, PetL, PetM and PetN. The complex functions as a dimer.

It localises to the cellular thylakoid membrane. In terms of biological role, component of the cytochrome b6-f complex, which mediates electron transfer between photosystem II (PSII) and photosystem I (PSI), cyclic electron flow around PSI, and state transitions. The polypeptide is Cytochrome b6-f complex subunit 4 (Rippkaea orientalis (strain PCC 8801 / RF-1) (Cyanothece sp. (strain PCC 8801))).